The chain runs to 126 residues: Ribonuclease P protein component (126 aa).

This sequence belongs to the RnpA family. As to quaternary structure, consists of a catalytic RNA component (M1 or rnpB) and a protein subunit.

It carries out the reaction Endonucleolytic cleavage of RNA, removing 5'-extranucleotides from tRNA precursor.. In terms of biological role, RNaseP catalyzes the removal of the 5'-leader sequence from pre-tRNA to produce the mature 5'-terminus. It can also cleave other RNA substrates such as 4.5S RNA. The protein component plays an auxiliary but essential role in vivo by binding to the 5'-leader sequence and broadening the substrate specificity of the ribozyme. The polypeptide is Ribonuclease P protein component (Rhodococcus erythropolis (strain PR4 / NBRC 100887)).